A 434-amino-acid polypeptide reads, in one-letter code: DNA primase large subunit PriL (434 aa).

[4Fe-4S] cluster-binding residues include Cys-281, Cys-392, Cys-403, and Cys-409.

This sequence belongs to the eukaryotic-type primase large subunit family. In terms of assembly, heterodimer of a small subunit (PriS) and a large subunit (PriL). [4Fe-4S] cluster serves as cofactor.

Functionally, regulatory subunit of DNA primase, an RNA polymerase that catalyzes the synthesis of short RNA molecules used as primers for DNA polymerase during DNA replication. Stabilizes and modulates the activity of the small subunit, increasing the rate of DNA synthesis, and conferring RNA synthesis capability. The DNA polymerase activity may enable DNA primase to also catalyze primer extension after primer synthesis. May also play a role in DNA repair. The chain is DNA primase large subunit PriL from Methanothermobacter thermautotrophicus (strain ATCC 29096 / DSM 1053 / JCM 10044 / NBRC 100330 / Delta H) (Methanobacterium thermoautotrophicum).